A 59-amino-acid chain; its full sequence is Beta-defensin 134 (59 aa).

The signal sequence occupies residues methionine 1–alanine 19. Intrachain disulfides connect cysteine 25–cysteine 51, cysteine 31–cysteine 45, and cysteine 35–cysteine 52.

The protein belongs to the beta-defensin family.

The protein resides in the secreted. Has antibacterial activity. The sequence is that of Beta-defensin 134 (DEFB134) from Pan troglodytes (Chimpanzee).